Here is a 326-residue protein sequence, read N- to C-terminus: tRNA-modifying protein YgfZ (326 aa).

Residues Trp27 and Trp189 each coordinate folate.

The protein belongs to the tRNA-modifying YgfZ family.

It is found in the cytoplasm. Folate-binding protein involved in regulating the level of ATP-DnaA and in the modification of some tRNAs. It is probably a key factor in regulatory networks that act via tRNA modification, such as initiation of chromosomal replication. The chain is tRNA-modifying protein YgfZ from Escherichia coli O45:K1 (strain S88 / ExPEC).